A 417-amino-acid chain; its full sequence is Serine hydroxymethyltransferase (417 aa).

(6S)-5,6,7,8-tetrahydrofolate contacts are provided by residues L119 and 123-125 (GHL). Position 227 is an N6-(pyridoxal phosphate)lysine (K227).

The protein belongs to the SHMT family. Homodimer. Pyridoxal 5'-phosphate is required as a cofactor.

It localises to the cytoplasm. It carries out the reaction (6R)-5,10-methylene-5,6,7,8-tetrahydrofolate + glycine + H2O = (6S)-5,6,7,8-tetrahydrofolate + L-serine. The protein operates within one-carbon metabolism; tetrahydrofolate interconversion. It functions in the pathway amino-acid biosynthesis; glycine biosynthesis; glycine from L-serine: step 1/1. Functionally, catalyzes the reversible interconversion of serine and glycine with tetrahydrofolate (THF) serving as the one-carbon carrier. This reaction serves as the major source of one-carbon groups required for the biosynthesis of purines, thymidylate, methionine, and other important biomolecules. Also exhibits THF-independent aldolase activity toward beta-hydroxyamino acids, producing glycine and aldehydes, via a retro-aldol mechanism. This Buchnera aphidicola subsp. Cinara cedri (strain Cc) protein is Serine hydroxymethyltransferase.